Reading from the N-terminus, the 248-residue chain is Phosphoribosyl isomerase A (248 aa).

Residue aspartate 14 is the Proton acceptor of the active site. The active-site Proton donor is aspartate 133.

The protein belongs to the HisA/HisF family.

The protein resides in the cytoplasm. It carries out the reaction 1-(5-phospho-beta-D-ribosyl)-5-[(5-phospho-beta-D-ribosylamino)methylideneamino]imidazole-4-carboxamide = 5-[(5-phospho-1-deoxy-D-ribulos-1-ylimino)methylamino]-1-(5-phospho-beta-D-ribosyl)imidazole-4-carboxamide. The enzyme catalyses N-(5-phospho-beta-D-ribosyl)anthranilate = 1-(2-carboxyphenylamino)-1-deoxy-D-ribulose 5-phosphate. It functions in the pathway amino-acid biosynthesis; L-histidine biosynthesis; L-histidine from 5-phospho-alpha-D-ribose 1-diphosphate: step 4/9. The protein operates within amino-acid biosynthesis; L-tryptophan biosynthesis; L-tryptophan from chorismate: step 3/5. Involved in both the histidine and tryptophan biosynthetic pathways. The protein is Phosphoribosyl isomerase A of Mycobacterium sp. (strain JLS).